The chain runs to 111 residues: Large ribosomal subunit protein uL22 (111 aa).

Belongs to the universal ribosomal protein uL22 family. In terms of assembly, part of the 50S ribosomal subunit.

In terms of biological role, this protein binds specifically to 23S rRNA; its binding is stimulated by other ribosomal proteins, e.g. L4, L17, and L20. It is important during the early stages of 50S assembly. It makes multiple contacts with different domains of the 23S rRNA in the assembled 50S subunit and ribosome. The globular domain of the protein is located near the polypeptide exit tunnel on the outside of the subunit, while an extended beta-hairpin is found that lines the wall of the exit tunnel in the center of the 70S ribosome. The sequence is that of Large ribosomal subunit protein uL22 from Francisella philomiragia subsp. philomiragia (strain ATCC 25017 / CCUG 19701 / FSC 153 / O#319-036).